Consider the following 285-residue polypeptide: Transmembrane protein 53-B (285 aa).

Residues 165 to 185 traverse the membrane as a helical segment; that stretch reads FLALAAFAIMVIILRIVLYPV.

This sequence belongs to the TMEM53 family.

It localises to the nucleus outer membrane. Its function is as follows. Ensures normal bone formation, through the negative regulation of bone morphogenetic protein (BMP) signaling in osteoblast lineage cells by blocking cytoplasm-nucleus translocation of phosphorylated SMAD proteins. The chain is Transmembrane protein 53-B (tmem53-b) from Xenopus laevis (African clawed frog).